A 232-amino-acid chain; its full sequence is Flagellar L-ring protein (232 aa).

The N-terminal stretch at 1–21 (MQKNAAHTYAISSLLVLSLTG) is a signal peptide. The N-palmitoyl cysteine moiety is linked to residue Cys-22. Cys-22 is lipidated: S-diacylglycerol cysteine.

This sequence belongs to the FlgH family. As to quaternary structure, the basal body constitutes a major portion of the flagellar organelle and consists of four rings (L,P,S, and M) mounted on a central rod.

The protein resides in the cell outer membrane. Its subcellular location is the bacterial flagellum basal body. Its function is as follows. Assembles around the rod to form the L-ring and probably protects the motor/basal body from shearing forces during rotation. In Escherichia coli O7:K1 (strain IAI39 / ExPEC), this protein is Flagellar L-ring protein.